An 86-amino-acid chain; its full sequence is Latartoxin-1b (86 aa).

A signal peptide spans M1–S19. A propeptide spans A20 to R26 (removed in mature form). Positions E23–R26 match the Processing quadruplet motif motif. 4 cysteine pairs are disulfide-bonded: C28-C43, C35-C48, C42-C65, and C50-C63.

It belongs to the neurotoxin 19 (CSTX) family. Contains 4 disulfide bonds. In terms of processing, cleavage of the propeptide depends on the processing quadruplet motif (XXXR, with at least one of X being E). As to expression, expressed by the venom gland.

The protein resides in the secreted. Its function is as follows. Insect toxin. In Lachesana tarabaevi (Spider), this protein is Latartoxin-1b.